Reading from the N-terminus, the 133-residue chain is Large ribosomal subunit protein bL20 (133 aa).

It belongs to the bacterial ribosomal protein bL20 family.

Binds directly to 23S ribosomal RNA and is necessary for the in vitro assembly process of the 50S ribosomal subunit. It is not involved in the protein synthesizing functions of that subunit. This Bartonella henselae (strain ATCC 49882 / DSM 28221 / CCUG 30454 / Houston 1) (Rochalimaea henselae) protein is Large ribosomal subunit protein bL20.